The chain runs to 379 residues: Chaperone protein DnaJ (379 aa).

The 66-residue stretch at 5–70 (DYYEILEVSR…EKRAAYDRYG (66 aa)) folds into the J domain. Residues 135–213 (GIKVPISYVT…CGGSGRVRNE (79 aa)) form a CR-type zinc finger. 8 residues coordinate Zn(2+): C148, C151, C165, C168, C187, C190, C201, and C204. CXXCXGXG motif repeat units follow at residues 148 to 155 (CSSCSGIG), 165 to 172 (CGNCNGAG), 187 to 194 (CNVCNGEG), and 201 to 208 (CRRCGGSG).

Belongs to the DnaJ family. As to quaternary structure, homodimer. Zn(2+) is required as a cofactor.

The protein resides in the cytoplasm. Its function is as follows. Participates actively in the response to hyperosmotic and heat shock by preventing the aggregation of stress-denatured proteins and by disaggregating proteins, also in an autonomous, DnaK-independent fashion. Unfolded proteins bind initially to DnaJ; upon interaction with the DnaJ-bound protein, DnaK hydrolyzes its bound ATP, resulting in the formation of a stable complex. GrpE releases ADP from DnaK; ATP binding to DnaK triggers the release of the substrate protein, thus completing the reaction cycle. Several rounds of ATP-dependent interactions between DnaJ, DnaK and GrpE are required for fully efficient folding. Also involved, together with DnaK and GrpE, in the DNA replication of plasmids through activation of initiation proteins. This Anaplasma marginale (strain Florida) protein is Chaperone protein DnaJ.